A 162-amino-acid polypeptide reads, in one-letter code: UPF0305 protein MmarC6_0221 (162 aa).

Belongs to the UPF0305 family.

This is UPF0305 protein MmarC6_0221 from Methanococcus maripaludis (strain C6 / ATCC BAA-1332).